A 195-amino-acid polypeptide reads, in one-letter code: Probable GTP-binding protein EngB (195 aa).

An EngB-type G domain is found at 24-195; it reads ELPEIALAGR…EAWDAILEKL (172 aa). Residues 32-39, 59-63, 77-80, 144-147, and 176-178 contribute to the GTP site; these read GRSNVGKS, GKTQL, DVPG, TKAD, and FSS. The Mg(2+) site is built by Ser39 and Thr61.

Belongs to the TRAFAC class TrmE-Era-EngA-EngB-Septin-like GTPase superfamily. EngB GTPase family. Mg(2+) serves as cofactor.

Necessary for normal cell division and for the maintenance of normal septation. This is Probable GTP-binding protein EngB from Streptococcus pneumoniae (strain ATCC 700669 / Spain 23F-1).